We begin with the raw amino-acid sequence, 235 residues long: MTTYIAYGNINQPFSLESLPDELIPENLYQIETDSSRVFQRHQCRRLAHLLLFQLLKIAGKSTALLSQIHRTESGRPYFLDERIDFNISHSGDWVAVILDIRNEEKSAVGIDIEFPKIRNFTALMEHIAPKEEIDWFHHQQDSLNAFYRCWCLREAVLKSQGFGIVKLSNVRHFPEQQKIFSDYCPQGQLWFTDELPIYLAAFVNHQEKLPHFYEWNRESLQIKELEKYVLYEVN.

Residues Asp112, Glu114, and Glu155 each contribute to the Mg(2+) site.

Belongs to the P-Pant transferase superfamily. Gsp/Sfp/HetI/AcpT family. Mg(2+) serves as cofactor.

May transfer the 4'-phosphopantetheine moiety from coenzyme A (CoA) to a serine residue of a carrier protein domain. In Haemophilus influenzae (strain ATCC 51907 / DSM 11121 / KW20 / Rd), this protein is Putative 4'-phosphopantetheinyl transferase HI_0152.